Consider the following 1528-residue polypeptide: DNA topoisomerase 2-alpha (1528 aa).

Met1 is subject to N-acetylmethionine. Position 4 is a phosphoserine (Ser4). A Glycyl lysine isopeptide (Lys-Gly) (interchain with G-Cter in SUMO2) cross-link involves residue Lys17. ATP contacts are provided by residues Asn90, Asn119, and 147-149 (SSN). Residues Lys155 and Lys156 each participate in a glycyl lysine isopeptide (Lys-Gly) (interchain with G-Cter in SUMO2) cross-link. 160-167 (GRNGYGAK) is a binding site for ATP. Thr281 is subject to Phosphothreonine. The interval 341-343 (KKK) is interaction with DNA. A Glycyl lysine isopeptide (Lys-Gly) (interchain with G-Cter in SUMO2) cross-link involves residue Lys351. Residue 375-377 (QTK) coordinates ATP. Residues Lys385, Lys396, Lys415, Lys417, Lys424, and Lys439 each participate in a glycyl lysine isopeptide (Lys-Gly) (interchain with G-Cter in SUMO2) cross-link. The region spanning 454–571 (CTLILTEGDS…SLLRHRFLEE (118 aa)) is the Toprim domain. Residue Glu460 participates in Mg(2+) binding. Residues Lys465, Lys479, and Lys528 each participate in a glycyl lysine isopeptide (Lys-Gly) (interchain with G-Cter in SUMO2) cross-link. Positions 540 and 542 each coordinate Mg(2+). Residues Lys583, Lys598, Lys613, Lys621, Lys624, Lys631, Lys638, Lys654, Lys661, and Lys675 each participate in a glycyl lysine isopeptide (Lys-Gly) (interchain with G-Cter in SUMO2) cross-link. In terms of domain architecture, Topo IIA-type catalytic spans 714–1168 (IPSMVDGLKP…SPSDLWKEDL (455 aa)). The active-site O-(5'-phospho-DNA)-tyrosine intermediate is Tyr804. The segment at 989–998 (KLQSSLTCNS) is interaction with DNA. Lys1074 is covalently cross-linked (Glycyl lysine isopeptide (Lys-Gly) (interchain with G-Cter in SUMO2)). Disordered regions lie at residues 1090-1118 (KEAQ…AAEA) and 1183-1211 (KQDE…VLPS). The segment covering 1098–1107 (DEEENEESDT) has biased composition (acidic residues). At Ser1105 the chain carries Phosphoserine; by CK1. A compositionally biased stretch (low complexity) spans 1108-1118 (ETSTSDSAAEA). Residues Lys1193 and Lys1201 each participate in a glycyl lysine isopeptide (Lys-Gly) (interchain with G-Cter in SUMO2) cross-link. Ser1211 is modified (phosphoserine). Residue Lys1226 forms a Glycyl lysine isopeptide (Lys-Gly) (interchain with G-Cter in SUMO2) linkage. The disordered stretch occupies residues 1229 to 1528 (AEKKIRKKIK…EESDDDDDLF (300 aa)). Residue Lys1238 forms a Glycyl lysine isopeptide (Lys-Gly) (interchain with G-Cter in SUMO1); alternate linkage. Lys1238 is covalently cross-linked (Glycyl lysine isopeptide (Lys-Gly) (interchain with G-Cter in SUMO2); alternate). Position 1245 is a phosphothreonine (Thr1245). A compositionally biased stretch (basic and acidic residues) spans 1258–1270 (QRIEKKQKKEPGA). Residues Lys1272, Lys1279, and Lys1282 each participate in a glycyl lysine isopeptide (Lys-Gly) (interchain with G-Cter in SUMO2) cross-link. Ser1291, Ser1293, Ser1295, and Ser1298 each carry phosphoserine. The segment covering 1296-1306 (DVSSNESNVDV) has biased composition (low complexity). The residue at position 1323 (Thr1323) is a Phosphothreonine. Residues 1326–1345 (LDSDEDFSGLDEKDEDEDFL) show a composition bias toward acidic residues. Phosphoserine is present on residues Ser1328 and Ser1333. Residue Thr1350 is modified to Phosphothreonine. Glycyl lysine isopeptide (Lys-Gly) (interchain with G-Cter in SUMO2) cross-links involve residues Lys1359 and Lys1363. Residues Ser1370 and Ser1373 each carry the phosphoserine modification. A Glycyl lysine isopeptide (Lys-Gly) (interchain with G-Cter in SUMO2) cross-link involves residue Lys1382. Phosphoserine is present on residues Ser1384 and Ser1388. Residue Lys1418 forms a Glycyl lysine isopeptide (Lys-Gly) (interchain with G-Cter in SUMO2); alternate linkage. Residue Lys1418 is modified to N6-acetyllysine; alternate. An interaction with PLSCR1 region spans residues 1429–1435 (KKRAAPK). Residue Lys1438 forms a Glycyl lysine isopeptide (Lys-Gly) (interchain with G-Cter in SUMO2); alternate linkage. An N6-acetyllysine; alternate modification is found at Lys1438. Glycyl lysine isopeptide (Lys-Gly) (interchain with G-Cter in SUMO2) cross-links involve residues Lys1450 and Lys1455. Phosphoserine occurs at positions 1465, 1467, 1470, and 1472. Glycyl lysine isopeptide (Lys-Gly) (interchain with G-Cter in SUMO2) cross-links involve residues Lys1480 and Lys1488. Positions 1506–1519 (AKSDRARKPIKYLE) are enriched in basic and acidic residues. Position 1521 is a phosphoserine (Ser1521).

It belongs to the type II topoisomerase family. Homodimer. Interacts with COPS5. Interacts with RECQL5; this stimulates DNA decatenation. Interacts with SETMAR; stimulates the topoisomerase activity. Interacts with DHX9; this interaction occurs in a E2 enzyme UBE2I- and RNA-dependent manner, negatively regulates DHX9-mediated double-stranded DNA and RNA duplex helicase activity and stimulates TOP2A-mediated supercoiled DNA relaxation activity. Interacts with HNRNPU (via C-terminus); this interaction protects the topoisomerase TOP2A from degradation and positively regulates the relaxation of supercoiled DNA in a RNA-dependent manner. Interacts with MCM3AP. Interacts with ERCC6. Interacts with PLSCR1. Interacts with GCNA; this interaction allows the resolution of topoisomerase II (TOP2A) DNA-protein cross-links. Interacts with POL1RA/RPA1 (via dock II) and UBTF in the context of Pol I complex; may assist Pol I transcription initiation by releasing supercoils occurring during DNA unwinding. Interacts with TPRN; TPRN interacts with a number of DNA damage response proteins, is recruited to sites of DNA damage and may play a role in DNA damage repair. Requires Mg(2+) as cofactor. Mn(2+) is required as a cofactor. The cofactor is Ca(2+). In terms of processing, phosphorylation has no effect on catalytic activity. However, phosphorylation at Ser-1105 by CSNK1D/CK1 promotes DNA cleavable complex formation.

Its subcellular location is the cytoplasm. The protein resides in the nucleus. It is found in the nucleoplasm. The protein localises to the nucleolus. It catalyses the reaction ATP-dependent breakage, passage and rejoining of double-stranded DNA.. Functionally, key decatenating enzyme that alters DNA topology by binding to two double-stranded DNA molecules, generating a double-stranded break in one of the strands, passing the intact strand through the broken strand, and religating the broken strand. May play a role in regulating the period length of BMAL1 transcriptional oscillation. This chain is DNA topoisomerase 2-alpha (Top2a), found in Mus musculus (Mouse).